The chain runs to 157 residues: Ribosome maturation factor RimP (157 aa).

This sequence belongs to the RimP family.

Its subcellular location is the cytoplasm. Required for maturation of 30S ribosomal subunits. The sequence is that of Ribosome maturation factor RimP from Levilactobacillus brevis (strain ATCC 367 / BCRC 12310 / CIP 105137 / JCM 1170 / LMG 11437 / NCIMB 947 / NCTC 947) (Lactobacillus brevis).